A 118-amino-acid chain; its full sequence is MIEALLVATGGFFGAITRFAISNWLKKRNKTQFPIATFLINITGAFLLGYIIGSGVTTGWQLLLGTGFMGAFTTFSTFKLESVQLLNRKNFSTFLLYLSATYIVGILFAFLGMKLGGI.

4 consecutive transmembrane segments (helical) span residues 1–21 (MIEA…RFAI), 33–53 (FPIA…YIIG), 55–75 (GVTT…FTTF), and 93–113 (TFLL…FLGM). 2 residues coordinate Na(+): G70 and T73.

Belongs to the fluoride channel Fluc/FEX (TC 1.A.43) family.

Its subcellular location is the cell membrane. It carries out the reaction fluoride(in) = fluoride(out). Its activity is regulated as follows. Na(+) is not transported, but it plays an essential structural role and its presence is essential for fluoride channel function. In terms of biological role, fluoride-specific ion channel. Important for reducing fluoride concentration in the cell, thus reducing its toxicity. This Bacillus thuringiensis subsp. konkukian (strain 97-27) protein is Fluoride-specific ion channel FluC 2.